An 89-amino-acid polypeptide reads, in one-letter code: Small ribosomal subunit protein uS14A (89 aa).

It belongs to the universal ribosomal protein uS14 family. As to quaternary structure, part of the 30S ribosomal subunit. Contacts proteins S3 and S10.

Functionally, binds 16S rRNA, required for the assembly of 30S particles and may also be responsible for determining the conformation of the 16S rRNA at the A site. The polypeptide is Small ribosomal subunit protein uS14A (Lactiplantibacillus plantarum (strain ATCC BAA-793 / NCIMB 8826 / WCFS1) (Lactobacillus plantarum)).